The primary structure comprises 89 residues: UPF0223 protein BPUM_1362 (89 aa).

It belongs to the UPF0223 family.

This is UPF0223 protein BPUM_1362 from Bacillus pumilus (strain SAFR-032).